Here is a 309-residue protein sequence, read N- to C-terminus: uncharacterized protein (309 aa).

The S4 RNA-binding domain maps to 11–87; the sequence is QRLDTFLATL…FPLDILYEDE (77 aa). The active site involves Asp-131.

This sequence belongs to the pseudouridine synthase RluA family.

The catalysed reaction is a uridine in RNA = a pseudouridine in RNA. This is an uncharacterized protein from Mycoplasma pneumoniae (strain ATCC 29342 / M129 / Subtype 1) (Mycoplasmoides pneumoniae).